The sequence spans 165 residues: Crossover junction endodeoxyribonuclease RuvC (165 aa).

Residues aspartate 7, glutamate 67, and aspartate 140 contribute to the active site. 3 residues coordinate Mg(2+): aspartate 7, glutamate 67, and aspartate 140.

The protein belongs to the RuvC family. Homodimer which binds Holliday junction (HJ) DNA. The HJ becomes 2-fold symmetrical on binding to RuvC with unstacked arms; it has a different conformation from HJ DNA in complex with RuvA. In the full resolvosome a probable DNA-RuvA(4)-RuvB(12)-RuvC(2) complex forms which resolves the HJ. Mg(2+) serves as cofactor.

Its subcellular location is the cytoplasm. The catalysed reaction is Endonucleolytic cleavage at a junction such as a reciprocal single-stranded crossover between two homologous DNA duplexes (Holliday junction).. The RuvA-RuvB-RuvC complex processes Holliday junction (HJ) DNA during genetic recombination and DNA repair. Endonuclease that resolves HJ intermediates. Cleaves cruciform DNA by making single-stranded nicks across the HJ at symmetrical positions within the homologous arms, yielding a 5'-phosphate and a 3'-hydroxyl group; requires a central core of homology in the junction. The consensus cleavage sequence is 5'-(A/T)TT(C/G)-3'. Cleavage occurs on the 3'-side of the TT dinucleotide at the point of strand exchange. HJ branch migration catalyzed by RuvA-RuvB allows RuvC to scan DNA until it finds its consensus sequence, where it cleaves and resolves the cruciform DNA. This Desulfitobacterium hafniense (strain DSM 10664 / DCB-2) protein is Crossover junction endodeoxyribonuclease RuvC.